The sequence spans 463 residues: RuvB-like 2 (463 aa).

Ala-2 carries the N-acetylalanine modification. Lys-9 participates in a covalent cross-link: Glycyl lysine isopeptide (Lys-Gly) (interchain with G-Cter in SUMO2). 77–84 provides a ligand contact to ATP; it reads GQPGTGKT. Ser-437 is modified (phosphoserine). Residues Lys-444 and Lys-456 each participate in a glycyl lysine isopeptide (Lys-Gly) (interchain with G-Cter in SUMO2) cross-link.

This sequence belongs to the RuvB family. As to quaternary structure, forms homohexameric rings. Can form a dodecamer with RUVBL1 made of two stacked hexameric rings; however, even though RUVBL1 and RUVBL2 are present in equimolar ratio, the oligomeric status of each hexamer is not known. Oligomerization may regulate binding to nucleic acids and conversely, binding to nucleic acids may affect the dodecameric assembly. Interaction of the complex with DHX34 results in conformational changes of the N-terminus of the RUVBL2 subunits, resulting in loss of nucleotide binding ability and ATP hydrolysis of the complex. Interacts with the transcriptional activation domain of MYC. Interacts with ATF2. Component of the RNA polymerase II holoenzyme complex. May also act to bridge the LEF1/TCF1-CTNNB1 complex and TBP. Component of the NuA4 histone acetyltransferase complex which contains the catalytic subunit KAT5/TIP60 and the subunits EP400, TRRAP/PAF400, BRD8/SMAP, EPC1, DMAP1/DNMAP1, RUVBL1/TIP49, RUVBL2, ING3, actin, ACTL6A/BAF53A, MORF4L1/MRG15, MORF4L2/MRGX, MRGBP, YEATS4/GAS41, VPS72/YL1 and MEAF6. The NuA4 complex interacts with MYC and the adenovirus E1A protein. RUVBL2 interacts with EP400. Component of a NuA4-related complex which contains EP400, TRRAP/PAF400, SRCAP, BRD8/SMAP, EPC1, DMAP1/DNMAP1, RUVBL1/TIP49, RUVBL2, actin, ACTL6A/BAF53A, VPS72 and YEATS4/GAS41. Interacts with NPAT. Component of the chromatin-remodeling INO80 complex; specifically part of a complex module associated with the helicase ATP-binding and the helicase C-terminal domain of INO80. Component of some MLL1/MLL complex, at least composed of the core components KMT2A/MLL1, ASH2L, HCFC1/HCF1, WDR5 and RBBP5, as well as the facultative components BACC1, CHD8, E2F6, HSP70, INO80C, KANSL1, LAS1L, MAX, MCRS1, MGA, MYST1/MOF, PELP1, PHF20, PRP31, RING2, RUVB1/TIP49A, RUVB2/TIP49B, SENP3, TAF1, TAF4, TAF6, TAF7, TAF9 and TEX10. Interacts with IGHMBP2. Interacts with TELO2. Interacts with HINT1. Component of a SWR1-like complex. Component of the R2TP complex composed at least of RUVBL1, RUVBL2, RPAP3 and PIHD1. Component of the PAQosome complex which is responsible for the biogenesis of several protein complexes and which consists of R2TP complex members RUVBL1, RUVBL2, RPAP3 and PIH1D1, URI complex members PFDN2, PFDN6, PDRG1, UXT and URI1 as well as ASDURF, POLR2E and DNAAF10/WDR92. Interacts with ITFG1. Interacts with ZMYND10. Interacts with WAC; WAC positively regulates MTOR activity by promoting the assembly of the TTT complex composed of TELO2, TTI1 and TTI2 and the RUVBL complex composed of RUVBL1 and RUVBL2 into the TTT-RUVBL complex which leads to the dimerization of the mTORC1 complex and its subsequent activation. Forms a complex with APPL1 and APPL2. Interacts with ZNHIT2 (via HIT-type zinc finger) in the presence of ATP or ADP; shows a stronger interaction in the presence of ADP. The RUVBL1/RUVBL2 complex interacts with ZNHIT1 (via HIT-type zinc finger), ZNHIT3 (via HIT-type zinc finger), ZNHIT6 (via HIT-type zinc finger) and DDX59/ZNHIT5 (via HIT-type zinc finger) in the presence of ADP. Interacts with NOPCHAP1; the interaction is direct and disrupted upon ATP binding. Interacts with SMG1. (Microbial infection) Interacts with Mumps L polymerase; this interaction regulates the viral transcription. Ubiquitously expressed. Highly expressed in testis and thymus.

The protein resides in the nucleus matrix. It localises to the nucleus. It is found in the nucleoplasm. The protein localises to the cytoplasm. Its subcellular location is the membrane. The protein resides in the dynein axonemal particle. The enzyme catalyses ATP + H2O = ADP + phosphate + H(+). Its function is as follows. Possesses single-stranded DNA-stimulated ATPase and ATP-dependent DNA helicase (5' to 3') activity; hexamerization is thought to be critical for ATP hydrolysis and adjacent subunits in the ring-like structure contribute to the ATPase activity. Component of the NuA4 histone acetyltransferase complex which is involved in transcriptional activation of select genes principally by acetylation of nucleosomal histones H4 and H2A. This modification may both alter nucleosome -DNA interactions and promote interaction of the modified histones with other proteins which positively regulate transcription. This complex may be required for the activation of transcriptional programs associated with oncogene and proto-oncogene mediated growth induction, tumor suppressor mediated growth arrest and replicative senescence, apoptosis, and DNA repair. The NuA4 complex ATPase and helicase activities seem to be, at least in part, contributed by the association of RUVBL1 and RUVBL2 with EP400. NuA4 may also play a direct role in DNA repair when recruited to sites of DNA damage. Component of a SWR1-like complex that specifically mediates the removal of histone H2A.Z/H2AZ1 from the nucleosome. Proposed core component of the chromatin remodeling INO80 complex which exhibits DNA- and nucleosome-activated ATPase activity and catalyzes ATP-dependent nucleosome sliding. Plays an essential role in oncogenic transformation by MYC and also modulates transcriptional activation by the LEF1/TCF1-CTNNB1 complex. May also inhibit the transcriptional activity of ATF2. Involved in the endoplasmic reticulum (ER)-associated degradation (ERAD) pathway where it negatively regulates expression of ER stress response genes. May play a role in regulating the composition of the U5 snRNP complex. The sequence is that of RuvB-like 2 (RUVBL2) from Homo sapiens (Human).